The following is a 175-amino-acid chain: Calcineurin subunit B (175 aa).

EF-hand domains lie at 21–56, 60–88, 90–125, and 131–166; these read DEIE…SANP, RIME…FSGR, SKDE…MVGS, and QLQQ…TEVA. The Ca(2+) site is built by Asp34, Asp36, Ser38, Ser40, Glu45, Asp66, Asp68, Ser70, Asp72, Glu77, Asp103, Asp105, Asp107, Glu114, Asp144, Asp146, Asp148, Gln150, and Glu155.

Belongs to the calcineurin regulatory subunit family. As to quaternary structure, composed of a catalytic subunit (A) and a regulatory subunit (B).

Regulatory subunit of calcineurin, a calcium-dependent, calmodulin stimulated protein phosphatase. Confers calcium sensitivity. In Candida glabrata (strain ATCC 2001 / BCRC 20586 / JCM 3761 / NBRC 0622 / NRRL Y-65 / CBS 138) (Yeast), this protein is Calcineurin subunit B (CNB1).